A 272-amino-acid polypeptide reads, in one-letter code: tRNA pseudouridine synthase B (272 aa).

Residue Asp-38 is the Nucleophile of the active site.

This sequence belongs to the pseudouridine synthase TruB family. Type 1 subfamily.

The enzyme catalyses uridine(55) in tRNA = pseudouridine(55) in tRNA. In terms of biological role, responsible for synthesis of pseudouridine from uracil-55 in the psi GC loop of transfer RNAs. This chain is tRNA pseudouridine synthase B, found in Campylobacter jejuni subsp. jejuni serotype O:6 (strain 81116 / NCTC 11828).